A 403-amino-acid chain; its full sequence is Acetate kinase (403 aa).

Mg(2+) is bound at residue asparagine 7. Position 14 (lysine 14) interacts with ATP. Arginine 90 serves as a coordination point for substrate. Aspartate 147 acts as the Proton donor/acceptor in catalysis. ATP contacts are provided by residues 207–211 (HIGNG), 283–285 (DMR), and 331–335 (GVGEN). Glutamate 386 is a binding site for Mg(2+).

The protein belongs to the acetokinase family. In terms of assembly, homodimer. Mg(2+) serves as cofactor. Requires Mn(2+) as cofactor.

It is found in the cytoplasm. The catalysed reaction is acetate + ATP = acetyl phosphate + ADP. It functions in the pathway metabolic intermediate biosynthesis; acetyl-CoA biosynthesis; acetyl-CoA from acetate: step 1/2. In terms of biological role, catalyzes the formation of acetyl phosphate from acetate and ATP. Can also catalyze the reverse reaction. The polypeptide is Acetate kinase (Thermotoga sp. (strain RQ2)).